A 274-amino-acid chain; its full sequence is Orotidine 5'-phosphate decarboxylase (274 aa).

K95 serves as the catalytic Proton donor.

The protein belongs to the OMP decarboxylase family. Type 2 subfamily.

The catalysed reaction is orotidine 5'-phosphate + H(+) = UMP + CO2. The protein operates within pyrimidine metabolism; UMP biosynthesis via de novo pathway; UMP from orotate: step 2/2. The sequence is that of Orotidine 5'-phosphate decarboxylase from Paracidovorax citrulli (strain AAC00-1) (Acidovorax citrulli).